Consider the following 644-residue polypeptide: Protein cueball (644 aa).

The first 26 residues, Met-1 to Gly-26, serve as a signal peptide directing secretion. At Thr-27–Ser-531 the chain is on the extracellular side. Asn-82 and Asn-108 each carry an N-linked (GlcNAc...) asparagine glycan. LDL-receptor class B repeat units lie at residues Met-121–Arg-166, Arg-167–Ser-211, and Asp-212–Ala-257. Asn-175, Asn-190, and Asn-196 each carry an N-linked (GlcNAc...) asparagine glycan. The N-linked (GlcNAc...) asparagine glycan is linked to Asn-313. EGF-like domains lie at Glu-398–Glu-430 and Glu-433–Glu-471. 5 disulfides stabilise this stretch: Cys-402–Cys-411, Cys-406–Cys-421, Cys-437–Cys-447, Cys-441–Cys-459, and Cys-461–Cys-470. 2 N-linked (GlcNAc...) asparagine glycosylation sites follow: Asn-473 and Asn-508. Residues Ser-532–Val-552 traverse the membrane as a helical segment. The Cytoplasmic portion of the chain corresponds to His-553–Tyr-644.

The protein belongs to the cueball family.

It is found in the cell membrane. Functionally, has a role in spermatogenesis and oogenesis. In Drosophila erecta (Fruit fly), this protein is Protein cueball.